Consider the following 364-residue polypeptide: Chorismate synthase (364 aa).

Positions 48 and 54 each coordinate NADP(+). Residues 125–127 (RSS), 238–239 (NA), G278, 293–297 (KPTSS), and R319 each bind FMN.

Belongs to the chorismate synthase family. As to quaternary structure, homotetramer. The cofactor is FMNH2.

It catalyses the reaction 5-O-(1-carboxyvinyl)-3-phosphoshikimate = chorismate + phosphate. It participates in metabolic intermediate biosynthesis; chorismate biosynthesis; chorismate from D-erythrose 4-phosphate and phosphoenolpyruvate: step 7/7. In terms of biological role, catalyzes the anti-1,4-elimination of the C-3 phosphate and the C-6 proR hydrogen from 5-enolpyruvylshikimate-3-phosphate (EPSP) to yield chorismate, which is the branch point compound that serves as the starting substrate for the three terminal pathways of aromatic amino acid biosynthesis. This reaction introduces a second double bond into the aromatic ring system. In Marinobacter nauticus (strain ATCC 700491 / DSM 11845 / VT8) (Marinobacter aquaeolei), this protein is Chorismate synthase.